The following is a 155-amino-acid chain: Fibroblast growth factor 1 (155 aa).

Residue A2 is modified to N-acetylalanine. Positions A2 to R15 are excised as a propeptide. A heparin-binding site is contributed by N33. Positions K127 to K143 are heparin-binding.

It belongs to the heparin-binding growth factors family. In terms of assembly, monomer. Homodimer. Interacts with FGFR1, FGFR2, FGFR3 and FGFR4. Affinity between fibroblast growth factors (FGFs) and their receptors is increased by heparan sulfate glycosaminoglycans that function as coreceptors. Found in a complex with FGFBP1, FGF1 and FGF2. Interacts with FGFBP1. Part of a Cu(2+)-dependent multiprotein aggregate containing FGF1, S100A13 and SYT1. Interacts with SYT1. Interacts with S100A13. Interacts with LRRC59. Interacts with CSNKA, CSNKB and FIBP. While binding with LRRC59, CSNKA and FIBP seem mutually exclusive, CSNKB and FIBP may cooperatively interact with FGF1. Forms a ternary complex with FGFR1 and ITGAV:ITGB3 and induces the recruitment of PTPN11 to the complex. In terms of processing, in the nucleus, phosphorylated by PKC/PRKCD.

It localises to the secreted. It is found in the cytoplasm. Its subcellular location is the cell cortex. The protein localises to the cytosol. The protein resides in the nucleus. Plays an important role in the regulation of cell survival, cell division, angiogenesis, cell differentiation and cell migration. Functions as a potent mitogen in vitro. Acts as a ligand for FGFR1 and integrins. Binds to FGFR1 in the presence of heparin leading to FGFR1 dimerization and activation via sequential autophosphorylation on tyrosine residues which act as docking sites for interacting proteins, leading to the activation of several signaling cascades. Binds to integrin ITGAV:ITGB3. Its binding to integrin, subsequent ternary complex formation with integrin and FGFR1, and the recruitment of PTPN11 to the complex are essential for FGF1 signaling. Induces the phosphorylation and activation of FGFR1, FRS2, MAPK3/ERK1, MAPK1/ERK2 and AKT1. Can induce angiogenesis. The polypeptide is Fibroblast growth factor 1 (Fgf1) (Mus musculus (Mouse)).